The chain runs to 253 residues: MVEFRAYQEEARYFKYAFNAAGKVVEEAPLIVTENGIVSRAMDASHIAMAVLEMPWEMFDEYEPPSDELMYGLDMEEVTRIVRRARVTDEITLEGEDEEEVIIKLGSSGYEREFRLRSIDIDDIPDEPELDFAVEVTVVPDFIQDAVRDADLVSDTVKVGAKGNTFYFKAEGERGRVIPKVQEGAEALLTFEVEEDVETAYPLDYLKDMIQAAQGAESVRIRLGQDMPLELTFRIGPAGEGKLTFYLAPRVEE.

Belongs to the PCNA family. Homotrimer. The subunits circularize to form a toroid; DNA passes through its center. Replication factor C (RFC) is required to load the toroid on the DNA.

In terms of biological role, sliding clamp subunit that acts as a moving platform for DNA processing. Responsible for tethering the catalytic subunit of DNA polymerase and other proteins to DNA during high-speed replication. The polypeptide is DNA polymerase sliding clamp (Methanopyrus kandleri (strain AV19 / DSM 6324 / JCM 9639 / NBRC 100938)).